Here is a 262-residue protein sequence, read N- to C-terminus: Phosphatidylserine decarboxylase proenzyme (262 aa).

Active-site charge relay system; for autoendoproteolytic cleavage activity residues include Asp-86, His-142, and Ser-226. Ser-226 (schiff-base intermediate with substrate; via pyruvic acid; for decarboxylase activity) is an active-site residue. Ser-226 carries the post-translational modification Pyruvic acid (Ser); by autocatalysis.

The protein belongs to the phosphatidylserine decarboxylase family. PSD-B subfamily. Prokaryotic type I sub-subfamily. As to quaternary structure, heterodimer of a large membrane-associated beta subunit and a small pyruvoyl-containing alpha subunit. The cofactor is pyruvate. In terms of processing, is synthesized initially as an inactive proenzyme. Formation of the active enzyme involves a self-maturation process in which the active site pyruvoyl group is generated from an internal serine residue via an autocatalytic post-translational modification. Two non-identical subunits are generated from the proenzyme in this reaction, and the pyruvate is formed at the N-terminus of the alpha chain, which is derived from the carboxyl end of the proenzyme. The autoendoproteolytic cleavage occurs by a canonical serine protease mechanism, in which the side chain hydroxyl group of the serine supplies its oxygen atom to form the C-terminus of the beta chain, while the remainder of the serine residue undergoes an oxidative deamination to produce ammonia and the pyruvoyl prosthetic group on the alpha chain. During this reaction, the Ser that is part of the protease active site of the proenzyme becomes the pyruvoyl prosthetic group, which constitutes an essential element of the active site of the mature decarboxylase.

The protein resides in the cell membrane. The catalysed reaction is a 1,2-diacyl-sn-glycero-3-phospho-L-serine + H(+) = a 1,2-diacyl-sn-glycero-3-phosphoethanolamine + CO2. It participates in phospholipid metabolism; phosphatidylethanolamine biosynthesis; phosphatidylethanolamine from CDP-diacylglycerol: step 2/2. In terms of biological role, catalyzes the formation of phosphatidylethanolamine (PtdEtn) from phosphatidylserine (PtdSer). This chain is Phosphatidylserine decarboxylase proenzyme, found in Bacillus mycoides (strain KBAB4) (Bacillus weihenstephanensis).